The primary structure comprises 263 residues: NH(3)-dependent NAD(+) synthetase (263 aa).

Residue 29-36 (GISGGIDS) participates in ATP binding. Mg(2+) is bound at residue Asp35. Arg114 lines the deamido-NAD(+) pocket. Thr134 is an ATP binding site. Glu139 is a Mg(2+) binding site. Deamido-NAD(+) contacts are provided by Lys147 and Asp154. Lys163 and Ser185 together coordinate ATP. 244 to 245 (HK) serves as a coordination point for deamido-NAD(+).

Belongs to the NAD synthetase family. Homodimer.

The enzyme catalyses deamido-NAD(+) + NH4(+) + ATP = AMP + diphosphate + NAD(+) + H(+). It functions in the pathway cofactor biosynthesis; NAD(+) biosynthesis; NAD(+) from deamido-NAD(+) (ammonia route): step 1/1. Catalyzes the ATP-dependent amidation of deamido-NAD to form NAD. Uses ammonia as a nitrogen source. The chain is NH(3)-dependent NAD(+) synthetase from Methanococcoides burtonii (strain DSM 6242 / NBRC 107633 / OCM 468 / ACE-M).